The chain runs to 214 residues: Large ribosomal subunit protein uL16 (214 aa).

Residue Arg32 is modified to Citrulline. Lys175 participates in a covalent cross-link: Glycyl lysine isopeptide (Lys-Gly) (interchain with G-Cter in SUMO2). Residue Lys188 forms a Glycyl lysine isopeptide (Lys-Gly) (interchain with G-Cter in ubiquitin) linkage.

The protein belongs to the universal ribosomal protein uL16 family. As to quaternary structure, component of the large ribosomal subunit. Mature ribosomes consist of a small (40S) and a large (60S) subunit. The 40S subunit contains about 33 different proteins and 1 molecule of RNA (18S). The 60S subunit contains about 49 different proteins and 3 molecules of RNA (28S, 5.8S and 5S). Citrullinated by PADI4. Post-translationally, ufmylated by UFL1.

It localises to the cytoplasm. In terms of biological role, component of the large ribosomal subunit. Plays a role in the formation of actively translating ribosomes. May play a role in the embryonic brain development. This is Large ribosomal subunit protein uL16 from Pongo abelii (Sumatran orangutan).